A 216-amino-acid chain; its full sequence is Ribonuclease HII (216 aa).

The 189-residue stretch at 28 to 216 (ACIAGIDEAG…GVKEYVRSEE (189 aa)) folds into the RNase H type-2 domain. The a divalent metal cation site is built by Asp34, Glu35, and Asp126.

The protein belongs to the RNase HII family. The cofactor is Mn(2+). Mg(2+) is required as a cofactor.

It localises to the cytoplasm. It catalyses the reaction Endonucleolytic cleavage to 5'-phosphomonoester.. Endonuclease that specifically degrades the RNA of RNA-DNA hybrids. This is Ribonuclease HII from Geotalea uraniireducens (strain Rf4) (Geobacter uraniireducens).